A 471-amino-acid polypeptide reads, in one-letter code: Uronate isomerase (471 aa).

This sequence belongs to the metallo-dependent hydrolases superfamily. Uronate isomerase family.

It carries out the reaction D-glucuronate = D-fructuronate. It catalyses the reaction aldehydo-D-galacturonate = keto-D-tagaturonate. Its pathway is carbohydrate metabolism; pentose and glucuronate interconversion. The chain is Uronate isomerase from Xanthomonas campestris pv. campestris (strain 8004).